The primary structure comprises 510 residues: Beta-glucosidase 12 (510 aa).

A signal peptide spans 1–24; the sequence is MAAAGAMPGGLLLTFLLLAVVASG. Gln-53 contributes to the a beta-D-glucoside binding site. Asn-122 carries N-linked (GlcNAc...) asparagine glycosylation. A beta-D-glucoside is bound by residues His-157 and 202–203; that span reads NE. Glu-203 functions as the Proton donor in the catalytic mechanism. Cystine bridges form between Cys-208-Cys-243 and Cys-222-Cys-230. Asn-229 is a glycosylation site (N-linked (GlcNAc...) asparagine). Tyr-346 contributes to the a beta-D-glucoside binding site. N-linked (GlcNAc...) asparagine glycosylation is found at Asn-361 and Asn-371. Glu-417 is a binding site for a beta-D-glucoside. Glu-417 functions as the Nucleophile in the catalytic mechanism. A glycan (N-linked (GlcNAc...) asparagine) is linked at Asn-425. A beta-D-glucoside contacts are provided by residues Trp-466, 473 to 474, and Phe-482; that span reads EW.

It belongs to the glycosyl hydrolase 1 family.

It localises to the secreted. It carries out the reaction Hydrolysis of terminal, non-reducing beta-D-glucosyl residues with release of beta-D-glucose.. Its function is as follows. Hydrolyzes p-nitrophenyl beta-D-glucoside, p-nitrophenyl beta-D-galactoside, p-nitrophenyl beta-D-xyloside, p-nitrophenyl beta-D-fucoside, p-nitrophenyl beta-L-arabinoside, cello-oligosaccharides and laminaribiose. In Oryza sativa subsp. indica (Rice), this protein is Beta-glucosidase 12.